The chain runs to 423 residues: Glucose-1-phosphate adenylyltransferase 1 (423 aa).

Alpha-D-glucose 1-phosphate is bound by residues Tyr111, Gly176, Glu191–Lys192, and Ser209.

The protein belongs to the bacterial/plant glucose-1-phosphate adenylyltransferase family. In terms of assembly, homotetramer.

The enzyme catalyses alpha-D-glucose 1-phosphate + ATP + H(+) = ADP-alpha-D-glucose + diphosphate. The protein operates within glycan biosynthesis; glycogen biosynthesis. In terms of biological role, involved in the biosynthesis of ADP-glucose, a building block required for the elongation reactions to produce glycogen. Catalyzes the reaction between ATP and alpha-D-glucose 1-phosphate (G1P) to produce pyrophosphate and ADP-Glc. This Alkalilimnicola ehrlichii (strain ATCC BAA-1101 / DSM 17681 / MLHE-1) protein is Glucose-1-phosphate adenylyltransferase 1.